Here is a 293-residue protein sequence, read N- to C-terminus: Non-structural protein NS-S (293 aa).

Residues 21-29 are essential for inhibition of IFN-beta activation and interaction with host TBK1; the sequence is VRLEPSLGE. The segment at 66 to 69 is involved in inclusion bodies formation; sequence PKNP. An interaction with host TNIP2 region spans residues 148–220; the sequence is FEGDMILDSL…KPLLDCWDFF (73 aa).

It belongs to the Bandavirus NS-S protein family. In terms of assembly, interacts with the host E3 ubiquitin ligase TRIM25; this interaction sequesters TRIM25 in NSs-induced cytoplasmic inclusion bodies. Interacts with the host E3 ubiquitin ligase RIGI; this interaction sequesters RIGI in NSs-induced cytoplasmic inclusion bodies. Interacts with the host E3 ubiquitin ligase TBK1 (via N-terminus); this interaction sequesters TBK1 in NSs-induced cytoplasmic inclusion bodies and inhibits TBK1 phosphorylation. NSs does not interact with IKBKE/IKKE or IRF3. Interacts with host IRF7; this interaction sequesters IRF7 in NSs-induced cytoplasmic inclusion bodies. Interacts with host SYNGR2; this interaction is essential to promoting the formation of the inclusion bodies to become virus factories for viral RNA replication through its interaction with NSs. Interacts with host STAT2; this interaction sequesters STAT2 in NSs-induced cytoplasmic inclusion bodies. Interacts with host TNIP2; this interaction promotes TPL2 complex formation and signaling activity leading to IL-10 production. Interacts with host TRIM21 (via B30.2/SPRY domain); this interaction activates host NFE2L2-mediated transcriptional activation of antioxidant genes. Interacts with host CDK1; this interaction is inclusion body dependent, it inhibits the formation and nuclear import of the cyclin B1-CDK1 complex and leads to host cell cycle arrest.

Its subcellular location is the host cytoplasm. It localises to the host cytoplasmic vesicle. Its function is as follows. Sequesters host STAT2 into viral inclusion bodies. Impairs IFN-stimulated phosphorylation and nuclear translocation of host STAT2, thereby suppressing type-I IFN antiviral signaling. Sequesters host TRIM25, RIGI, TBK1/IKK complex components (TBK1, IKBKE/IKKE, and IRF3) and IRF7 into viral inclusion bodies, thereby inhibiting the IFN responses. Inhibits TRIM25-mediated ubiquitination of the RIGI. The sequestration of IKBKE/IKKE, and IRF3 occurs via the interaction with TBK1. Sequestration and inhibition of host TBK1 probably participates to the cytokine storm induced by the virus. Also inhibits the phosphorylation of host TBK1. Interacts with host TNIP2 and promotes TPL2-TNIP2-p105 complex formation leading to IL-10 induction. By interacting with CDK1, induces host cell arrest at the G2/M transition to promote viral replication. Requested for the formation of the viral cytoplasmic inclusion bodies. This SFTS phlebovirus (isolate SFTSV/Human/China/HB29/2010) (Severe fever with thrombocytopenia virus) protein is Non-structural protein NS-S (NSS).